A 185-amino-acid chain; its full sequence is Ribosome-recycling factor (185 aa).

Belongs to the RRF family.

Its subcellular location is the cytoplasm. Functionally, responsible for the release of ribosomes from messenger RNA at the termination of protein biosynthesis. May increase the efficiency of translation by recycling ribosomes from one round of translation to another. This Neisseria gonorrhoeae (strain ATCC 700825 / FA 1090) protein is Ribosome-recycling factor.